The sequence spans 144 residues: MKIATKYHGDIEIHEKDIVRFEQGIPGFLEEKQFVLLPLEDTPFIILQSVNTPALGFVLIEPFSYFPTYEIDLDDNTLEQLQITGEQDVALYVILTVADPFDDTTANLQAPIVINVHKRLGKQVILTNTNYKTKHRLFPEKVAK.

This sequence belongs to the FliW family. As to quaternary structure, monomer. One copy interacts with the each alpha-helical wing of the CsrA homodimer, yielding a FliW-CsrA(2)-FliW complex. Comparison with a CsrA-mRNA structure (2JPP) suggests CsrA cannot bind both mRNA and FliW at the same time. Interacts with flagellin.

It is found in the cytoplasm. Acts as an anti-CsrA protein, binds CsrA and prevents it from repressing translation of its target genes, one of which is flagellin. Binds to flagellin and participates in the assembly of the flagellum. In terms of biological role, allosterically inhibits CsrA binding to mRNA in a non-competitive fashion by preventing CsrA binding to the 5'-UTR. The chain is Flagellar assembly factor FliW from Geobacillus thermodenitrificans (strain NG80-2).